A 233-amino-acid chain; its full sequence is Large ribosomal subunit protein uL1 (233 aa).

It belongs to the universal ribosomal protein uL1 family. Part of the 50S ribosomal subunit.

Binds directly to 23S rRNA. The L1 stalk is quite mobile in the ribosome, and is involved in E site tRNA release. Its function is as follows. Protein L1 is also a translational repressor protein, it controls the translation of the L11 operon by binding to its mRNA. The polypeptide is Large ribosomal subunit protein uL1 (Shewanella baltica (strain OS185)).